We begin with the raw amino-acid sequence, 363 residues long: D(1) dopamine receptor (363 aa).

Residues 1-24 (MAVLDLNLTTVIDSGFMESDRSVR) are Extracellular-facing. Asparagine 7 is a glycosylation site (N-linked (GlcNAc...) asparagine). The helical transmembrane segment at 25-45 (VLTGCFLSVLILSTLLGNTLV) threads the bilayer. Residues 46 to 61 (CAAVTKFRHLRSKVTN) lie on the Cytoplasmic side of the membrane. The helical transmembrane segment at 62-81 (FFVISLAVSDLLVAVLVMPW) threads the bilayer. The Extracellular segment spans residues 82 to 98 (KAVTEVAGFWPFGAFCD). Cysteine 97 and cysteine 187 are joined by a disulfide. Residues 99-120 (IWVAFDIMCSTASILNLCVISV) form a helical membrane-spanning segment. The Cytoplasmic segment spans residues 121 to 139 (DRYWAISSPFRYERKMTPR). The chain crosses the membrane as a helical span at residues 140 to 164 (VAFVMISGAWTLSVLISFIPVQLKW). Residues 165-194 (HKAQPIGFLEVNASRRDLPTDNCDSSLNRT) are Extracellular-facing. A helical membrane pass occupies residues 195–219 (YAISSSLISFYIPVAIMIVTYTQIY). The Cytoplasmic portion of the chain corresponds to 220–271 (RIAQKQIRRISALERAAESAQIRHDSMGSGSNMDLESSFKLSFKRETKVLKT). A helical transmembrane segment spans residues 272 to 297 (LSVIMGVFVCCWLPFFILNCMVPFCK). At 298–310 (RTSNGLPCISPTT) the chain is on the extracellular side. A helical membrane pass occupies residues 311–330 (FDVFVWFGWANSSLNPIIYA). Topologically, residues 331 to 363 (FNADFRRAFAILLGCQRLCPGSISMETPSLNKN) are cytoplasmic. Residue cysteine 345 is the site of S-palmitoyl cysteine attachment.

This sequence belongs to the G-protein coupled receptor 1 family. In terms of tissue distribution, retina.

The protein resides in the cell membrane. The protein localises to the cell projection. It is found in the cilium membrane. Functionally, dopamine receptor whose activity is mediated by G proteins which activate adenylyl cyclase. Could be involved in growth hormone release. The chain is D(1) dopamine receptor from Carassius auratus (Goldfish).